The primary structure comprises 256 residues: Triosephosphate isomerase (256 aa).

Substrate is bound at residue 12-14 (NWK). Histidine 99 serves as the catalytic Electrophile. The active-site Proton acceptor is glutamate 169. Substrate-binding positions include glycine 175, serine 214, and 235–236 (GG).

The protein belongs to the triosephosphate isomerase family. As to quaternary structure, homodimer.

The protein resides in the cytoplasm. It catalyses the reaction D-glyceraldehyde 3-phosphate = dihydroxyacetone phosphate. It functions in the pathway carbohydrate biosynthesis; gluconeogenesis. The protein operates within carbohydrate degradation; glycolysis; D-glyceraldehyde 3-phosphate from glycerone phosphate: step 1/1. In terms of biological role, involved in the gluconeogenesis. Catalyzes stereospecifically the conversion of dihydroxyacetone phosphate (DHAP) to D-glyceraldehyde-3-phosphate (G3P). The protein is Triosephosphate isomerase of Mesorhizobium japonicum (strain LMG 29417 / CECT 9101 / MAFF 303099) (Mesorhizobium loti (strain MAFF 303099)).